The chain runs to 359 residues: Protein RecA (359 aa).

G64–T71 serves as a coordination point for ATP. A disordered region spans residues N328–I359. Positions P331 to K344 are enriched in basic and acidic residues.

The protein belongs to the RecA family.

It localises to the cytoplasm. In terms of biological role, can catalyze the hydrolysis of ATP in the presence of single-stranded DNA, the ATP-dependent uptake of single-stranded DNA by duplex DNA, and the ATP-dependent hybridization of homologous single-stranded DNAs. It interacts with LexA causing its activation and leading to its autocatalytic cleavage. The protein is Protein RecA of Francisella tularensis subsp. novicida (strain U112).